The chain runs to 346 residues: Farnesyl diphosphate synthase 1 (346 aa).

Residues K52, R55, and Q90 each contribute to the isopentenyl diphosphate site. 2 residues coordinate Mg(2+): D97 and D101. The DDXXD motif motif lies at 97 to 101 (DDIMD). R106 provides a ligand contact to dimethylallyl diphosphate. Residue R107 coordinates isopentenyl diphosphate. K194, T195, and Q233 together coordinate dimethylallyl diphosphate. Residues 236 to 240 (DDYLD) carry the DDXXD motif motif. 2 residues coordinate dimethylallyl diphosphate: K250 and K259.

The protein belongs to the FPP/GGPP synthase family. Requires Mg(2+) as cofactor. It depends on Mn(2+) as a cofactor. In terms of tissue distribution, highly expressed in shoots.

It carries out the reaction isopentenyl diphosphate + (2E)-geranyl diphosphate = (2E,6E)-farnesyl diphosphate + diphosphate. It catalyses the reaction isopentenyl diphosphate + dimethylallyl diphosphate = (2E)-geranyl diphosphate + diphosphate. It participates in isoprenoid biosynthesis; farnesyl diphosphate biosynthesis; farnesyl diphosphate from geranyl diphosphate and isopentenyl diphosphate: step 1/1. Its pathway is isoprenoid biosynthesis; geranyl diphosphate biosynthesis; geranyl diphosphate from dimethylallyl diphosphate and isopentenyl diphosphate: step 1/1. Catalyzes the sequential condensation of isopentenyl pyrophosphate (IPP) with the allylic pyrophosphates, dimethylallyl pyrophosphate (DMAPP), and then with the resultant geranylpyrophosphate (GPP) to the ultimate product farnesyl pyrophosphate (FPP). Has a 4.5 time greater affinity for GPP versus DMAPP. This chain is Farnesyl diphosphate synthase 1 (FDS-1), found in Artemisia spiciformis (Spiked big sagebrush).